The sequence spans 139 residues: D-ribose pyranase (139 aa).

The active-site Proton donor is the histidine 20. Residues aspartate 28, histidine 106, and 128 to 130 contribute to the substrate site; that span reads YAN.

Belongs to the RbsD / FucU family. RbsD subfamily. As to quaternary structure, homodecamer.

It is found in the cytoplasm. It carries out the reaction beta-D-ribopyranose = beta-D-ribofuranose. It participates in carbohydrate metabolism; D-ribose degradation; D-ribose 5-phosphate from beta-D-ribopyranose: step 1/2. Functionally, catalyzes the interconversion of beta-pyran and beta-furan forms of D-ribose. In Vibrio campbellii (strain ATCC BAA-1116), this protein is D-ribose pyranase.